Here is a 225-residue protein sequence, read N- to C-terminus: Transmembrane protein 225 (225 aa).

Residues 1-8 (MVHVSNRS) lie on the Cytoplasmic side of the membrane. The chain crosses the membrane as a helical span at residues 9–29 (IQGMNILFSSWAVVLMVMGIT). Topologically, residues 30–72 (LDKWVELISEDERAKMNHSPWMMCCPALWPEDDLKVVRIMMTS) are extracellular. Residues 73–93 (SLGLSFLLNLILGMKFTYLIP) form a helical membrane-spanning segment. The Cytoplasmic portion of the chain corresponds to 94 to 99 (QNKYIQ). The chain crosses the membrane as a helical span at residues 100–120 (LFTTILSFFSGISLLWALILY). Topologically, residues 121 to 136 (HNKLKQGQSMHFSSYR) are extracellular. The chain crosses the membrane as a helical span at residues 137–157 (ITWIMYTAYLNVFFLSVCGVL). The Cytoplasmic segment spans residues 158-225 (SLLECKLSTS…VQTRHVTWAL (68 aa)). An RVxF motif is present at residues 219-223 (RHVTW).

As to quaternary structure, interacts (via RVxF motif) with PPP1CC.

It localises to the cytoplasmic vesicle. Its subcellular location is the secretory vesicle. The protein resides in the acrosome membrane. Its function is as follows. Probably inhibits protein phosphatase 1 (PP1) in sperm via binding to catalytic subunit PPP1CC. In Homo sapiens (Human), this protein is Transmembrane protein 225 (TMEM225).